A 358-amino-acid chain; its full sequence is Endoplasmic reticulum junction formation protein lunapark-B (358 aa).

The Cytoplasmic segment spans residues 1 to 45 (MGAIISRWKTKLTTVEQLENIDKEIKQLEEFRAKNQRLQKLWVGR). Residues 9-41 (KTKLTTVEQLENIDKEIKQLEEFRAKNQRLQKL) adopt a coiled-coil conformation. The chain crosses the membrane as a helical span at residues 46–66 (LLLYSSALYLLISLFVYLLYL). The Lumenal segment spans residues 67–69 (PEQ). A helical transmembrane segment spans residues 70–90 (WLLRLAMALPFFIYPVLVWFI). Topologically, residues 91-358 (RRFLIFLFSK…SRGMDKHGRA (268 aa)) are cytoplasmic. Residues 99–128 (SKRSERNNDKLEDLKATKKKILEEVMETET) are a coiled coil. The C4-type; plays a role in ER morphology zinc finger occupies 275–300 (CQQCFSHNGMALKEEFEYLAFRCAYC). The interval 320–358 (NFEKRLRAESSTPGPAPHSATDTEESAPPSRGMDKHGRA) is disordered.

Belongs to the lunapark family. Homodimer; homodimerization requires the C4-type zinc finger motif and decreases during mitosis in a phosphorylation-dependent manner. Phosphorylated. Phosphorylation occurs during interphase. Phosphorylation also occurs during mitosis; these phosphorylations reduce both its homodimerization and the ER three-way tubular junction formation.

It is found in the endoplasmic reticulum membrane. Functionally, endoplasmic reticulum (ER)-shaping membrane protein that plays a role in determining ER morphology. Involved in the stabilization of nascent three-way ER tubular junctions within the ER network. May also play a role as a curvature-stabilizing protein within three-way ER tubular junction network. The chain is Endoplasmic reticulum junction formation protein lunapark-B (lnpkb) from Takifugu rubripes (Japanese pufferfish).